Reading from the N-terminus, the 199-residue chain is SCO2-like protein RBE_0029 (199 aa).

The protein belongs to the SCO1/2 family.

In Rickettsia bellii (strain RML369-C), this protein is SCO2-like protein RBE_0029.